The following is a 175-amino-acid chain: Adenine phosphoribosyltransferase (175 aa).

It belongs to the purine/pyrimidine phosphoribosyltransferase family. As to quaternary structure, homodimer.

It localises to the cytoplasm. It carries out the reaction AMP + diphosphate = 5-phospho-alpha-D-ribose 1-diphosphate + adenine. The protein operates within purine metabolism; AMP biosynthesis via salvage pathway; AMP from adenine: step 1/1. In terms of biological role, catalyzes a salvage reaction resulting in the formation of AMP, that is energically less costly than de novo synthesis. The protein is Adenine phosphoribosyltransferase of Nitrosospira multiformis (strain ATCC 25196 / NCIMB 11849 / C 71).